The sequence spans 299 residues: Zinc finger protein 414 (299 aa).

Composition is skewed to polar residues over residues 1-20 (MEEP…SSSG) and 69-81 (DSCQ…TGVG). The tract at residues 1-98 (MEEPSRPSSD…PRRRPPPGKQ (98 aa)) is disordered. C2H2-type zinc fingers lie at residues 99–123 (IPCS…LRTH) and 135–159 (FRCS…GKLH). A C2H2-type 3; degenerate zinc finger spans residues 166–190 (FKCENCLLRFRTHRSLFKHLHVCID). Disordered regions lie at residues 193 to 228 (QNPA…PFPL) and 254 to 299 (PRLR…GACR). Residues 203-215 (LDKEPPVPERPPE) are compositionally biased toward basic and acidic residues. Over residues 217-228 (DPSSSLGLPFPL) the composition is skewed to low complexity.

This sequence belongs to the krueppel C2H2-type zinc-finger protein family.

It localises to the nucleus. May be involved in transcriptional regulation. In Mus musculus (Mouse), this protein is Zinc finger protein 414 (Znf414).